The following is a 473-amino-acid chain: Ribosomal RNA small subunit methyltransferase F (473 aa).

Residues 124–130, E148, D175, and D193 each bind S-adenosyl-L-methionine; that span reads ASAPGSK. The Nucleophile role is filled by C246.

This sequence belongs to the class I-like SAM-binding methyltransferase superfamily. RsmB/NOP family.

The protein resides in the cytoplasm. The catalysed reaction is cytidine(1407) in 16S rRNA + S-adenosyl-L-methionine = 5-methylcytidine(1407) in 16S rRNA + S-adenosyl-L-homocysteine + H(+). In terms of biological role, specifically methylates the cytosine at position 1407 (m5C1407) of 16S rRNA. This chain is Ribosomal RNA small subunit methyltransferase F, found in Aliivibrio fischeri (strain ATCC 700601 / ES114) (Vibrio fischeri).